We begin with the raw amino-acid sequence, 342 residues long: Phosphate acyltransferase (342 aa).

It belongs to the PlsX family. Homodimer. Probably interacts with PlsY.

The protein localises to the cytoplasm. The catalysed reaction is a fatty acyl-[ACP] + phosphate = an acyl phosphate + holo-[ACP]. It functions in the pathway lipid metabolism; phospholipid metabolism. Catalyzes the reversible formation of acyl-phosphate (acyl-PO(4)) from acyl-[acyl-carrier-protein] (acyl-ACP). This enzyme utilizes acyl-ACP as fatty acyl donor, but not acyl-CoA. The chain is Phosphate acyltransferase from Legionella pneumophila (strain Paris).